Here is a 703-residue protein sequence, read N- to C-terminus: MARTTPIELYRNIGIVAHVDAGKTTTTERILFYTGVNHKMGEVHDGAATMDWMAQEQERGITITSAATTAFWQGSTKQFAHKYRFNIIDTPGHVDFTIEVERSLRVLDGAVVVFSGADGVEPQSETVWRQANKYHVPRLAYINKMDRQGADFLRVVKQIDQRLGHHPVPIQLAIGSEENFMGQIDLVKMKAIYWNDADQGTSYREEEIPAELKALADEWRAHMIEAAAEANDELTMKFLDGEELSIEEIKAGLRQRTIANEIVPTILGSSFKNKGVPLMLDAVIDYLPAPSEIPAIRGTDPDDEEKHLERHADDKEPFSALAFKIATDPFVGTLTFARVYSGVLSSGNAVLNSVKGKKERIGRMVQMHANQRAEIKDVCAGDIAALIGMKDVTTGDTLCDMDKPIILERMDFPDPVISVAVEPKTKADQEKMGIALGKLAQEDPSFRVRTDEETGQTIISGMGELHLDIIVDRMRREFNVEANIGKPQVAYREKIRNTCEIEGRFVRQSGGRGQYGHCWIRFAPGDEGKEGLEFINEIVGGVVPREYIPAIQKGIEEQMKNGVLAGYPLINLKAAVFDGSYHDVDSNEMAYKIAASMATKQLSQKGGAVLLEPVMKVEVVTPEEYQGDILGDLSRRRGMIQDGDETPAGKVIRAEVPLGEMFGYATSMRSMTQGRASFSMEFTRYAEAPASIADGIVKKSRGE.

One can recognise a tr-type G domain in the interval 8–291; sequence ELYRNIGIVA…AVIDYLPAPS (284 aa). Residues 17 to 24, 89 to 93, and 143 to 146 contribute to the GTP site; these read AHVDAGKT, DTPGH, and NKMD.

It belongs to the TRAFAC class translation factor GTPase superfamily. Classic translation factor GTPase family. EF-G/EF-2 subfamily.

It localises to the cytoplasm. In terms of biological role, catalyzes the GTP-dependent ribosomal translocation step during translation elongation. During this step, the ribosome changes from the pre-translocational (PRE) to the post-translocational (POST) state as the newly formed A-site-bound peptidyl-tRNA and P-site-bound deacylated tRNA move to the P and E sites, respectively. Catalyzes the coordinated movement of the two tRNA molecules, the mRNA and conformational changes in the ribosome. The protein is Elongation factor G 2 (fusB) of Pseudomonas putida (strain ATCC 47054 / DSM 6125 / CFBP 8728 / NCIMB 11950 / KT2440).